A 276-amino-acid chain; its full sequence is Natural cytotoxicity triggering receptor 2 (276 aa).

A signal peptide spans 1–21; it reads MAWRALHPLLLLLLLFPGSQA. Positions 22–120 constitute an Ig-like domain; that stretch reads QSKAQVLQSV…IYRPSDNSVS (99 aa). Residues 22-192 lie on the Extracellular side of the membrane; it reads QSKAQVLQSV…LRPGPAAPIA (171 aa). 2 disulfide bridges follow: Cys40–Cys109 and Cys55–Cys63. Polar residues-rich tracts occupy residues 138-156 and 167-183; these read TSWTPRDLVSSQTQTQSCV and ESPSTIPVPSQPQNSTL. The tract at residues 138-184 is disordered; sequence TSWTPRDLVSSQTQTQSCVPPTAGARQAPESPSTIPVPSQPQNSTLR. Residue Asn180 is glycosylated (N-linked (GlcNAc...) asparagine). The helical transmembrane segment at 193–213 threads the bilayer; the sequence is LVPVFCGLLVAKSLVLSALLV. The Cytoplasmic segment spans residues 214-276; it reads WWGDIWWKTM…ISDDDDEHTL (63 aa).

The protein belongs to the natural cytotoxicity receptor (NCR) family. In terms of assembly, interacts with TYROBP/DAP12. Interacts with KMT2E isoform NKp44L. Selectively expressed by activated NK cells and by in vitro cultured (i.e. activated) TCRg/d lymphoid cells.

The protein resides in the cell membrane. Cytotoxicity-activating receptor that may contribute to the increased efficiency of activated natural killer (NK) cells to mediate tumor cell lysis. This Homo sapiens (Human) protein is Natural cytotoxicity triggering receptor 2 (NCR2).